The following is a 434-amino-acid chain: ATP-dependent protease ATPase subunit HslU (434 aa).

Residues Ile18, 60–65 (GVGKTE), Asp247, Glu312, and Arg384 each bind ATP.

The protein belongs to the ClpX chaperone family. HslU subfamily. A double ring-shaped homohexamer of HslV is capped on each side by a ring-shaped HslU homohexamer. The assembly of the HslU/HslV complex is dependent on binding of ATP.

Its subcellular location is the cytoplasm. Its function is as follows. ATPase subunit of a proteasome-like degradation complex; this subunit has chaperone activity. The binding of ATP and its subsequent hydrolysis by HslU are essential for unfolding of protein substrates subsequently hydrolyzed by HslV. HslU recognizes the N-terminal part of its protein substrates and unfolds these before they are guided to HslV for hydrolysis. The protein is ATP-dependent protease ATPase subunit HslU of Brucella abortus (strain S19).